We begin with the raw amino-acid sequence, 543 residues long: CTP synthase (543 aa).

An amidoligase domain region spans residues 1-265; the sequence is MTNYIFVTGG…DQLVVDRFGL (265 aa). S13 is a CTP binding site. Position 13 (S13) interacts with UTP. ATP contacts are provided by residues 14-19 and D71; that span reads SLGKGI. D71 and E139 together coordinate Mg(2+). Residues 146–148, 186–191, and K222 contribute to the CTP site; these read DIE and KTKPTQ. Residues 186 to 191 and K222 each bind UTP; that span reads KTKPTQ. 238 to 240 contributes to the ATP binding site; sequence KDV. A Glutamine amidotransferase type-1 domain is found at 290 to 541; it reads NIGMIGKYVE…VAAAGKYQKE (252 aa). G351 contacts L-glutamine. The active-site Nucleophile; for glutamine hydrolysis is the C378. Residues 379–382, E402, and R469 contribute to the L-glutamine site; that span reads LGMQ. Catalysis depends on residues H514 and E516.

It belongs to the CTP synthase family. In terms of assembly, homotetramer.

It catalyses the reaction UTP + L-glutamine + ATP + H2O = CTP + L-glutamate + ADP + phosphate + 2 H(+). It carries out the reaction L-glutamine + H2O = L-glutamate + NH4(+). The enzyme catalyses UTP + NH4(+) + ATP = CTP + ADP + phosphate + 2 H(+). It functions in the pathway pyrimidine metabolism; CTP biosynthesis via de novo pathway; CTP from UDP: step 2/2. Its activity is regulated as follows. Allosterically activated by GTP, when glutamine is the substrate; GTP has no effect on the reaction when ammonia is the substrate. The allosteric effector GTP functions by stabilizing the protein conformation that binds the tetrahedral intermediate(s) formed during glutamine hydrolysis. Inhibited by the product CTP, via allosteric rather than competitive inhibition. In terms of biological role, catalyzes the ATP-dependent amination of UTP to CTP with either L-glutamine or ammonia as the source of nitrogen. Regulates intracellular CTP levels through interactions with the four ribonucleotide triphosphates. The sequence is that of CTP synthase from Alteromonas mediterranea (strain DSM 17117 / CIP 110805 / LMG 28347 / Deep ecotype).